The sequence spans 333 residues: Serine racemase (333 aa).

Glutamate 13 serves as a coordination point for Mg(2+). ATP contacts are provided by serine 31, serine 32, isoleucine 33, lysine 51, and threonine 52. Lysine 56 (proton acceptor) is an active-site residue. Lysine 56 carries the N6-(pyridoxal phosphate)lysine modification. Proline 69 serves as a coordination point for Ca(2+). At threonine 71 the chain carries Phosphothreonine. Threonine 81 contributes to the Ca(2+) binding site. The Proton acceptor role is filled by serine 84. Asparagine 86 contacts pyridoxal 5'-phosphate. Glutamine 89 provides a ligand contact to ATP. Cysteine 113 carries the post-translational modification S-nitrosocysteine. Tyrosine 121 lines the ATP pocket. Asparagine 154 is a binding site for pyridoxal 5'-phosphate. Residue aspartate 178 participates in Mg(2+) binding. Pyridoxal 5'-phosphate is bound by residues glycine 185, glycine 186, glycine 187, glycine 188, and methionine 189. Residues glutamate 210, alanine 214, aspartate 216, and asparagine 247 each contribute to the Mg(2+) site. Residues glutamate 210, alanine 214, aspartate 216, and asparagine 247 each contribute to the Ca(2+) site. Mn(2+)-binding residues include glutamate 210, alanine 214, and aspartate 216. An ATP-binding site is contributed by lysine 279. Serine 313 provides a ligand contact to pyridoxal 5'-phosphate. Asparagine 316 lines the ATP pocket.

It belongs to the serine/threonine dehydratase family. As to quaternary structure, homodimer. The cofactor is Mg(2+). Mn(2+) is required as a cofactor. Requires Ca(2+) as cofactor. It depends on pyridoxal 5'-phosphate as a cofactor. S-nitrosylated, leading to decrease the enzyme activity. Expressed in the cerebellum and frontal cortex (at protein level).

The enzyme catalyses L-serine = D-serine. It catalyses the reaction D-serine = pyruvate + NH4(+). It carries out the reaction L-serine = pyruvate + NH4(+). Allosterically activated by magnesium, and possibly also other divalent metal cations. Allosterically activated by ATP, ADP or GTP. Competitively inhibited by malonate. Catalyzes the synthesis of D-serine from L-serine. D-serine is a key coagonist with glutamate at NMDA receptors. Has dehydratase activity towards both L-serine and D-serine. This is Serine racemase (Srr) from Rattus norvegicus (Rat).